The primary structure comprises 200 residues: Anthranilate synthase component 2, pyocyanine specific (200 aa).

The region spanning 2 to 195 (RITLLDNFDS…LLWCGALAVR (194 aa)) is the Glutamine amidotransferase type-1 domain. 56–58 (GPG) provides a ligand contact to L-glutamine. The Nucleophile; for GATase activity role is filled by C83. Residues Q87 and 133–134 (SL) contribute to the L-glutamine site. Active-site for GATase activity residues include H169 and E171.

In terms of assembly, heterotetramer consisting of two non-identical subunits: a beta subunit (PhnB) and a large alpha subunit (PhnA).

It carries out the reaction chorismate + L-glutamine = anthranilate + pyruvate + L-glutamate + H(+). It functions in the pathway secondary metabolite biosynthesis; pyocyanine biosynthesis. In terms of biological role, part of a heterotetrameric complex that catalyzes the two-step biosynthesis of anthranilate, a precursor for Pseudomonas quinolone signal (2-heptyl-3-hydroxy-4-quinolone; PQS) production which is required to induce the genes for the biosynthesis of the virulence factor pyocyanine (PCN), a characteristic blue-green phenazine pigment produced by P.aeruginosa. In the first step, the glutamine-binding beta subunit (PhnB) of anthranilate synthase (AS) provides the glutamine amidotransferase activity which generates ammonia as a substrate that, along with chorismate, is used in the second step, catalyzed by the large alpha subunit of AS (PhnA) to produce anthranilate. In Pseudomonas aeruginosa (strain ATCC 15692 / DSM 22644 / CIP 104116 / JCM 14847 / LMG 12228 / 1C / PRS 101 / PAO1), this protein is Anthranilate synthase component 2, pyocyanine specific.